Consider the following 196-residue polypeptide: ATP-dependent Clp protease proteolytic subunit (196 aa).

Ser96 functions as the Nucleophile in the catalytic mechanism. Residue His121 is part of the active site.

This sequence belongs to the peptidase S14 family. In terms of assembly, fourteen ClpP subunits assemble into 2 heptameric rings which stack back to back to give a disk-like structure with a central cavity, resembling the structure of eukaryotic proteasomes.

The protein localises to the cytoplasm. It catalyses the reaction Hydrolysis of proteins to small peptides in the presence of ATP and magnesium. alpha-casein is the usual test substrate. In the absence of ATP, only oligopeptides shorter than five residues are hydrolyzed (such as succinyl-Leu-Tyr-|-NHMec, and Leu-Tyr-Leu-|-Tyr-Trp, in which cleavage of the -Tyr-|-Leu- and -Tyr-|-Trp bonds also occurs).. Its function is as follows. Cleaves peptides in various proteins in a process that requires ATP hydrolysis. Has a chymotrypsin-like activity. Plays a major role in the degradation of misfolded proteins. The chain is ATP-dependent Clp protease proteolytic subunit from Streptococcus pneumoniae (strain P1031).